A 436-amino-acid chain; its full sequence is GTPase Obg (436 aa).

The 159-residue stretch at 2-160 (SMFLDTAKIK…RELQLELKIL (159 aa)) folds into the Obg domain. In terms of domain architecture, OBG-type G spans 161–338 (ADVGLVGFPS…LLDATAELLD (178 aa)). GTP-binding positions include 167 to 174 (GFPSVGKS), 192 to 196 (FTTIV), 214 to 217 (DLPG), 284 to 287 (NKMD), and 319 to 321 (SGL). Residues S174 and T194 each coordinate Mg(2+). The 79-residue stretch at 358 to 436 (GFDEEEKAFE…IGKFEFEFVD (79 aa)) folds into the OCT domain.

This sequence belongs to the TRAFAC class OBG-HflX-like GTPase superfamily. OBG GTPase family. In terms of assembly, monomer. It depends on Mg(2+) as a cofactor.

The protein localises to the cytoplasm. Its function is as follows. An essential GTPase which binds GTP, GDP and possibly (p)ppGpp with moderate affinity, with high nucleotide exchange rates and a fairly low GTP hydrolysis rate. Plays a role in control of the cell cycle, stress response, ribosome biogenesis and in those bacteria that undergo differentiation, in morphogenesis control. The protein is GTPase Obg of Streptococcus pneumoniae serotype 2 (strain D39 / NCTC 7466).